Here is a 502-residue protein sequence, read N- to C-terminus: tRNA-2-methylthio-N(6)-dimethylallyladenosine synthase (502 aa).

Residues 12–129 (RTYQVRTYGC…LPVLLERARH (118 aa)) enclose the MTTase N-terminal domain. Positions 21, 58, 92, 166, 170, and 173 each coordinate [4Fe-4S] cluster. Residues 152–383 (RESTYAGWVS…ACVEEITWAE (232 aa)) enclose the Radical SAM core domain. The region spanning 385–455 (RRLVGETVEV…PHHLNADGEP (71 aa)) is the TRAM domain. A disordered region spans residues 451-502 (ADGEPLAHRRTPAGDAAEAGRRPRTAGVSLGLPTVGAPPSPVPPAASSACAC).

This sequence belongs to the methylthiotransferase family. MiaB subfamily. In terms of assembly, monomer. [4Fe-4S] cluster is required as a cofactor.

Its subcellular location is the cytoplasm. The enzyme catalyses N(6)-dimethylallyladenosine(37) in tRNA + (sulfur carrier)-SH + AH2 + 2 S-adenosyl-L-methionine = 2-methylsulfanyl-N(6)-dimethylallyladenosine(37) in tRNA + (sulfur carrier)-H + 5'-deoxyadenosine + L-methionine + A + S-adenosyl-L-homocysteine + 2 H(+). In terms of biological role, catalyzes the methylthiolation of N6-(dimethylallyl)adenosine (i(6)A), leading to the formation of 2-methylthio-N6-(dimethylallyl)adenosine (ms(2)i(6)A) at position 37 in tRNAs that read codons beginning with uridine. This is tRNA-2-methylthio-N(6)-dimethylallyladenosine synthase from Salinispora arenicola (strain CNS-205).